The sequence spans 93 residues: Small ribosomal subunit protein bS20c (93 aa).

It belongs to the bacterial ribosomal protein bS20 family.

It localises to the plastid. Its subcellular location is the chloroplast. Functionally, binds directly to 16S ribosomal RNA. The protein is Small ribosomal subunit protein bS20c of Trieres chinensis (Marine centric diatom).